A 1058-amino-acid polypeptide reads, in one-letter code: MPKRTDIHKIMVIGSGPIIIGQAAEFDYSGTQACLALKELDYEVVLVNSNPATIMTDKEIADQVYLEPITLEFVSQILRKEHPDAILPTLGGQQGLNMAMELSKSGILDELHIELLGTKLSAIDQAEDREQFKALMEELGEPVPASGIARTVDEALAFAKQAGYPVIVRPAFTMGGTGGGIAETPQQLHDITENGLALSPVTQVLIEQSIAGYKEIEFEVMRDAADNAMVVCNMENFDPVGIHTGDSIVYAPVQTLADREVQLLRDAALKIIRALKIEGGCNVQLALDPNSFNYYIIEVNPRVSRSSALASKATGYPIAKMAAKIAVGLHLDEIKNPVTGTTYAEFEPALDYVVCKIPRWPFDKFTHADRRLGTQMKATGEVMAIGRNIEEATLKAVRSLEIGVHHVEEPALRSVDDDVLSDKLIHAQDDRLFYLTEAIRRGYPIDELAELTKINVFFLDKLLHIIEIEQALRTHTDDIETLTVAKRNGFADQTVADYWHETIDQVRDFRLAHKLAPVYKMVDTCAGEFASETPYYYGTYEFENESIVTKRPSVLVLGSGPIRIGQGVEFDYATVHSVKAIQKAGYEAIIMNSNPETVSTDFSVSDKLYFEPLTIEDVLNVIELEKPVGVIVQFGGQTAINLAKPLADHGIKILGTSVADVNRAEDRDEFDKVIKALAIPQPAGDTASDEATALAIADKLGYPVLVRPSYVLGGRAMEIVKKRTDLDYYMHNAVKVSHDHPVLVDSYLVGKECEVDAICDGQTVLIPGIMEHIERAGVHSGDSMAVYPPQSLSAAVQAQIVDYTEKLAIALNCVGMMNIQFVIHDDQVYVIEVNPRASRTVPFLSKVTNIPMAQVATRAILDQSLAEQGYQTGLVTPGPLVHVKAPVFSFSKLNRVDSLLGPEMKSTGEVMGSDVTMAKALYKAFEAAKLHVPSHGNVLLTVRDEDKPETVALAKRFHALGYQLLATRGTATALTTHGLPVTTVDKIDSGERDLLHRMEAGEIQVVINTVSDEEQAENDGTLIRNTSIMHGIPLFTALDTVAAILQVRESQSFVTQAL.

The segment at 1–401 (MPKRTDIHKI…ATLKAVRSLE (401 aa)) is carboxyphosphate synthetic domain. ATP is bound by residues arginine 129, arginine 169, glycine 175, glycine 176, glutamine 208, isoleucine 210, glutamate 215, glycine 241, isoleucine 242, histidine 243, glutamine 284, and glutamate 298. The region spanning 133–327 (KALMEELGEP…IAKMAAKIAV (195 aa)) is the ATP-grasp 1 domain. Mg(2+)-binding residues include glutamine 284, glutamate 298, and asparagine 300. 3 residues coordinate Mn(2+): glutamine 284, glutamate 298, and asparagine 300. Residues 402–546 (IGVHHVEEPA…YGTYEFENES (145 aa)) are oligomerization domain. Residues 547-929 (IVTKRPSVLV…ALYKAFEAAK (383 aa)) form a carbamoyl phosphate synthetic domain region. One can recognise an ATP-grasp 2 domain in the interval 671–861 (DKVIKALAIP…MAQVATRAIL (191 aa)). ATP-binding residues include arginine 707, serine 746, leucine 748, glutamate 752, glycine 777, valine 778, histidine 779, serine 780, glutamine 820, and glutamate 832. Residues glutamine 820, glutamate 832, and asparagine 834 each coordinate Mg(2+). Mn(2+) is bound by residues glutamine 820, glutamate 832, and asparagine 834. In terms of domain architecture, MGS-like spans 930–1058 (LHVPSHGNVL…ESQSFVTQAL (129 aa)). Residues 930-1058 (LHVPSHGNVL…ESQSFVTQAL (129 aa)) are allosteric domain.

Belongs to the CarB family. As to quaternary structure, composed of two chains; the small (or glutamine) chain promotes the hydrolysis of glutamine to ammonia, which is used by the large (or ammonia) chain to synthesize carbamoyl phosphate. Tetramer of heterodimers (alpha,beta)4. Mg(2+) is required as a cofactor. The cofactor is Mn(2+).

It carries out the reaction hydrogencarbonate + L-glutamine + 2 ATP + H2O = carbamoyl phosphate + L-glutamate + 2 ADP + phosphate + 2 H(+). The enzyme catalyses hydrogencarbonate + NH4(+) + 2 ATP = carbamoyl phosphate + 2 ADP + phosphate + 2 H(+). It functions in the pathway amino-acid biosynthesis; L-arginine biosynthesis; carbamoyl phosphate from bicarbonate: step 1/1. The protein operates within pyrimidine metabolism; UMP biosynthesis via de novo pathway; (S)-dihydroorotate from bicarbonate: step 1/3. Its function is as follows. Small subunit of the glutamine-dependent carbamoyl phosphate synthetase (CPSase). CPSase catalyzes the formation of carbamoyl phosphate from the ammonia moiety of glutamine, carbonate, and phosphate donated by ATP, constituting the first step of the biosynthetic pathway leading to pyrimidine nucleotides. The large subunit (synthetase) binds the substrates ammonia (free or transferred from glutamine from the small subunit), hydrogencarbonate and ATP and carries out an ATP-coupled ligase reaction, activating hydrogencarbonate by forming carboxy phosphate which reacts with ammonia to form carbamoyl phosphate. The polypeptide is Carbamoyl phosphate synthase pyrimidine-specific large chain (pyrAB) (Lactiplantibacillus plantarum (strain ATCC BAA-793 / NCIMB 8826 / WCFS1) (Lactobacillus plantarum)).